The chain runs to 209 residues: Ribosomal RNA large subunit methyltransferase E (209 aa).

S-adenosyl-L-methionine-binding residues include G63, W65, D83, D99, and D124. K164 functions as the Proton acceptor in the catalytic mechanism.

This sequence belongs to the class I-like SAM-binding methyltransferase superfamily. RNA methyltransferase RlmE family.

It is found in the cytoplasm. The enzyme catalyses uridine(2552) in 23S rRNA + S-adenosyl-L-methionine = 2'-O-methyluridine(2552) in 23S rRNA + S-adenosyl-L-homocysteine + H(+). Functionally, specifically methylates the uridine in position 2552 of 23S rRNA at the 2'-O position of the ribose in the fully assembled 50S ribosomal subunit. The sequence is that of Ribosomal RNA large subunit methyltransferase E from Photobacterium profundum (strain SS9).